The chain runs to 452 residues: UDP-N-acetylmuramoyl-L-alanine--L-glutamate ligase (452 aa).

118-124 serves as a coordination point for ATP; that stretch reads GSKGKST.

It belongs to the MurCDEF family. MurD2 subfamily.

It localises to the cytoplasm. It catalyses the reaction UDP-N-acetyl-alpha-D-muramoyl-L-alanine + L-glutamate + ATP = UDP-N-acetyl-alpha-D-muramoyl-L-alanyl-L-glutamate + ADP + phosphate + H(+). Its pathway is cell wall biogenesis; peptidoglycan biosynthesis. Its function is as follows. Cell wall formation. Catalyzes the addition of L-glutamate to the nucleotide precursor UDP-N-acetylmuramoyl-L-alanine. In Micromonospora sp. (strain ATCC 39149 / NRRL 15099 / SCC 1413), this protein is UDP-N-acetylmuramoyl-L-alanine--L-glutamate ligase.